A 470-amino-acid polypeptide reads, in one-letter code: Glucose-1-phosphate adenylyltransferase large subunit 1 (470 aa).

It belongs to the bacterial/plant glucose-1-phosphate adenylyltransferase family. Heterotetramer. As to expression, prominently expressed in the leaves and a weaker expression is seen in the tubers.

Its subcellular location is the plastid. The protein resides in the chloroplast. The protein localises to the amyloplast. The enzyme catalyses alpha-D-glucose 1-phosphate + ATP + H(+) = ADP-alpha-D-glucose + diphosphate. Its pathway is glycan biosynthesis; starch biosynthesis. Activated by 3'phosphoglycerate, inhibited by orthophosphate. Allosteric regulation. In terms of biological role, this protein plays a role in synthesis of starch. It catalyzes the synthesis of the activated glycosyl donor, ADP-glucose from Glc-1-P and ATP. The polypeptide is Glucose-1-phosphate adenylyltransferase large subunit 1 (AGPS1) (Solanum tuberosum (Potato)).